Here is a 432-residue protein sequence, read N- to C-terminus: Putative D-alanyl-D-alanine carboxypeptidase (432 aa).

Residues 7–25 (ATVLLTFSLSAFAVEYPVL) form a helical; Signal-anchor membrane-spanning segment.

It belongs to the peptidase S12 family. YfeW subfamily.

Its subcellular location is the cell inner membrane. The enzyme catalyses Preferential cleavage: (Ac)2-L-Lys-D-Ala-|-D-Ala. Also transpeptidation of peptidyl-alanyl moieties that are N-acyl substituents of D-alanine.. The polypeptide is Putative D-alanyl-D-alanine carboxypeptidase (Salmonella agona (strain SL483)).